Here is a 275-residue protein sequence, read N- to C-terminus: Formamidopyrimidine-DNA glycosylase (275 aa).

P2 functions as the Schiff-base intermediate with DNA in the catalytic mechanism. The active-site Proton donor is E3. Residue K58 is the Proton donor; for beta-elimination activity of the active site. DNA-binding residues include H89, R108, and K151. The FPG-type; degenerate zinc-finger motif lies at 236 to 275; sequence KVYDRAGQPCERCPGPAACAGISRTVQSGRATYFCARTQK. R265 acts as the Proton donor; for delta-elimination activity in catalysis.

It belongs to the FPG family. In terms of assembly, monomer. It depends on Zn(2+) as a cofactor.

It catalyses the reaction Hydrolysis of DNA containing ring-opened 7-methylguanine residues, releasing 2,6-diamino-4-hydroxy-5-(N-methyl)formamidopyrimidine.. It carries out the reaction 2'-deoxyribonucleotide-(2'-deoxyribose 5'-phosphate)-2'-deoxyribonucleotide-DNA = a 3'-end 2'-deoxyribonucleotide-(2,3-dehydro-2,3-deoxyribose 5'-phosphate)-DNA + a 5'-end 5'-phospho-2'-deoxyribonucleoside-DNA + H(+). Functionally, involved in base excision repair of DNA damaged by oxidation or by mutagenic agents. Acts as a DNA glycosylase that recognizes and removes damaged bases. Has a preference for oxidized purines, such as 7,8-dihydro-8-oxoguanine (8-oxoG). Has AP (apurinic/apyrimidinic) lyase activity and introduces nicks in the DNA strand. Cleaves the DNA backbone by beta-delta elimination to generate a single-strand break at the site of the removed base with both 3'- and 5'-phosphates. This is Formamidopyrimidine-DNA glycosylase from Acidiphilium cryptum (strain JF-5).